Consider the following 427-residue polypeptide: Inward rectifier potassium channel 2 (427 aa).

Residues 1-81 are Cytoplasmic-facing; the sequence is MGSVRTNRYS…IFTTCVDIRW (81 aa). The residue at position 76 (Cys-76) is an S-nitrosocysteine. Residues 82–106 form a helical membrane-spanning segment; that stretch reads RWMLVIFCLAFVLSWLFFGCVFWLI. The Extracellular portion of the chain corresponds to 107 to 128; it reads ALLHGDLDASKESKACVSEVNS. The segment at residues 129–140 is an intramembrane region (helical; Pore-forming); the sequence is FTAAFLFSIETQ. Positions 141 to 147 form an intramembrane region, pore-forming; that stretch reads TTIGYGF. Positions 142–147 match the Selectivity filter motif; that stretch reads TIGYGF. Over 148-156 the chain is Extracellular; sequence RCVTDECPI. The helical transmembrane segment at 157–178 threads the bilayer; sequence AVFMVVFQSIVGCIIDAFIIGA. The Cytoplasmic portion of the chain corresponds to 179 to 427; the sequence is VMAKMAKPKK…PRPLRRESEI (249 aa). The tract at residues 181 to 208 is polyphosphoinositide (PIP2)-binding; that stretch reads AKMAKPKKRNETLVFSHNAVIAMRDGKL. A disordered region spans residues 384-427; sequence SKEEDDSENGVPESTSTDTPPDIDLHNQASVPLEPRPLRRESEI. The PDZ-binding motif lies at 425–427; that stretch reads SEI.

The protein belongs to the inward rectifier-type potassium channel (TC 1.A.2.1) family. KCNJ2 subfamily. In terms of assembly, homotetramer. Homomultimeric and heteromultimeric association with KCNJ4/Kir2.3. Can form heteromeric channels with Kir2.6/KCNJ18. Associates, via its PDZ-recognition domain, with a complex containing LIN7A, LIN7B, LIN7C, DLG1, CASK and APBA1. Post-translationally, S-nitrosylation increases the open probability and inward rectifying currents.

The protein localises to the cell membrane. The protein resides in the sarcolemma. It localises to the T-tubule. It catalyses the reaction K(+)(in) = K(+)(out). Its activity is regulated as follows. Activated by phosphatidylinositol 4,5 biphosphate (PtdIns(4,5)P2). Inward rectifier potassium channels are characterized by a greater tendency to allow potassium to flow into the cell rather than out of it. Their voltage dependence is regulated by the concentration of extracellular potassium; as external potassium is raised, the voltage range of the channel opening shifts to more positive voltages. The inward rectification is mainly due to the blockage of outward current by internal magnesium. Blocked by external barium or cesium. Probably participates in establishing action potential waveform and excitability of neuronal and muscle tissues. The polypeptide is Inward rectifier potassium channel 2 (KCNJ2) (Cavia porcellus (Guinea pig)).